Consider the following 247-residue polypeptide: Putative 2-succinyl-6-hydroxy-2,4-cyclohexadiene-1-carboxylate synthase (247 aa).

Positions 4–229 constitute an AB hydrolase-1 domain; sequence IIFLHGLLGT…CAGHNSHLEN (226 aa).

Belongs to the AB hydrolase superfamily. MenH family. As to quaternary structure, monomer.

The catalysed reaction is 5-enolpyruvoyl-6-hydroxy-2-succinyl-cyclohex-3-ene-1-carboxylate = (1R,6R)-6-hydroxy-2-succinyl-cyclohexa-2,4-diene-1-carboxylate + pyruvate. The protein operates within quinol/quinone metabolism; 1,4-dihydroxy-2-naphthoate biosynthesis; 1,4-dihydroxy-2-naphthoate from chorismate: step 3/7. It functions in the pathway quinol/quinone metabolism; menaquinone biosynthesis. In terms of biological role, catalyzes a proton abstraction reaction that results in 2,5-elimination of pyruvate from 2-succinyl-5-enolpyruvyl-6-hydroxy-3-cyclohexene-1-carboxylate (SEPHCHC) and the formation of 2-succinyl-6-hydroxy-2,4-cyclohexadiene-1-carboxylate (SHCHC). This Haemophilus influenzae (strain ATCC 51907 / DSM 11121 / KW20 / Rd) protein is Putative 2-succinyl-6-hydroxy-2,4-cyclohexadiene-1-carboxylate synthase.